We begin with the raw amino-acid sequence, 259 residues long: Glandular kallikrein-10 (259 aa).

The signal sequence occupies residues 1 to 18; sequence MWFLILFLALSLGGIDAA. Residues 19–24 constitute a propeptide, activation peptide; sequence PPGQSR. The Peptidase S1 domain maps to 25-256; sequence IVGGYKCEKN…FTSWIKEVMK (232 aa). 5 disulfides stabilise this stretch: C31–C171, C48–C64, C150–C217, C182–C196, and C207–C232. H63 acts as the Charge relay system in catalysis. Residues N91 and N106 are each glycosylated (N-linked (GlcNAc...) asparagine). D118 functions as the Charge relay system in the catalytic mechanism. The Charge relay system role is filled by S211.

Belongs to the peptidase S1 family. Kallikrein subfamily. As to quaternary structure, heterodimer of a light chain and heavy chain linked by a disulfide bond. Post-translationally, probably N- and O-glycosylated. In terms of tissue distribution, kidney and submandibular gland, where it is found in the granular convoluted tubule and striated duct cells. It is likely that the enzyme is mainly synthesized in the granular convoluted tubules and then transferred to other tissues by release into the vasculature or interstitial space.

It carries out the reaction Preferential cleavage of Arg-|-Xaa bonds in small molecule substrates. Highly selective action to release kallidin (lysyl-bradykinin) from kininogen involves hydrolysis of Met-|-Xaa or Leu-|-Xaa.. Glandular kallikreins cleave Met-Lys and Arg-Ser bonds in kininogen to release Lys-bradykinin. This protein may be involved in the regulation of renal function. This is Glandular kallikrein-10 (Klk10) from Rattus norvegicus (Rat).